The following is a 672-amino-acid chain: Ubiquitin carboxyl-terminal hydrolase 19 (672 aa).

A helical membrane pass occupies residues 11–31 (NSFTQLILTLFFVSIGLLYFV). Zn(2+) is bound by residues cysteine 64, cysteine 67, cysteine 75, cysteine 78, cysteine 84, cysteine 88, histidine 97, and cysteine 101. Residues 64-101 (CSVCGKATTKKCSRCKSVRYCSAACQTSDWKSGHKLKC) form an MYND-type zinc finger. Positions 174 to 480 (CGLTNCGNSC…RAYMLLYSRV (307 aa)) constitute a USP domain. Cysteine 183 (nucleophile) is an active-site residue. The Proton acceptor role is filled by histidine 439. Residues 484 to 672 (PSNLRSEESQ…HSDTEMIDAQ (189 aa)) form a disordered region. The segment covering 488 to 499 (RSEESQDEKKTD) has biased composition (basic and acidic residues). A compositionally biased stretch (polar residues) spans 500–527 (TLNTESNQDGSVESSGVGTNDTSVSSLC). Composition is skewed to basic and acidic residues over residues 533–543 (HSEDPEYEKES) and 553–594 (EEGK…KEDP). The span at 606–615 (LDITTPSPSA) shows a compositional bias: polar residues. Residues 623-666 (ENERSDTESKPLEKEHSDTESNKPLEKEHLDSESKPLEKEHSDT) show a composition bias toward basic and acidic residues.

Belongs to the peptidase C19 family.

It is found in the membrane. It catalyses the reaction Thiol-dependent hydrolysis of ester, thioester, amide, peptide and isopeptide bonds formed by the C-terminal Gly of ubiquitin (a 76-residue protein attached to proteins as an intracellular targeting signal).. In terms of biological role, recognizes and hydrolyzes the peptide bond at the C-terminal Gly of ubiquitin. Involved in the processing of poly-ubiquitin precursors as well as that of ubiquitinated proteins. This is Ubiquitin carboxyl-terminal hydrolase 19 (UBP19) from Arabidopsis thaliana (Mouse-ear cress).